We begin with the raw amino-acid sequence, 200 residues long: Small ribosomal subunit protein uS4 (200 aa).

The interval 22 to 41 is disordered; it reads TGKEIEKRPYAPGQHGPNQR. In terms of domain architecture, S4 RNA-binding spans 92–152; it reads TRLDNLVYRL…EKSQNLAVVG (61 aa).

It belongs to the universal ribosomal protein uS4 family. Part of the 30S ribosomal subunit. Contacts protein S5. The interaction surface between S4 and S5 is involved in control of translational fidelity.

Functionally, one of the primary rRNA binding proteins, it binds directly to 16S rRNA where it nucleates assembly of the body of the 30S subunit. With S5 and S12 plays an important role in translational accuracy. This is Small ribosomal subunit protein uS4 from Lysinibacillus sphaericus (strain C3-41).